Consider the following 299-residue polypeptide: Apolipoprotein E (299 aa).

A signal peptide spans 1 to 18; sequence MKVLCTVLVVTLLAGCRA. The segment at 74-245 is 8 X 22 AA approximate tandem repeats; it reads VLMEDTMKAV…RLEEVREQME (172 aa). Tandem repeats lie at residues 75–95, 96–117, 118–139, 140–161, 162–183, 184–206, 207–225, and 224–242. Met-137 is subject to Methionine sulfoxide. Ser-141 carries the phosphoserine modification. Residues 152-162 form an LDL and other lipoprotein receptors binding region; it reads HLRKLRKRMLR. 156 to 159 is a heparin binding site; sequence LRKR. Residues 205–273 are lipid-binding and lipoprotein association; sequence ALTSQPLQER…GWFEPMVEDM (69 aa). A heparin-binding site is contributed by 219 to 226; it reads GKQLRGRL. A specificity for association with VLDL region spans residues 261 to 273; the sequence is RLKGWFEPMVEDM.

This sequence belongs to the apolipoprotein A1/A4/E family. Homotetramer. May interact with ABCA1; functionally associated with ABCA1 in the biogenesis of HDLs. May interact with APP/A4 amyloid-beta peptide; the interaction is extremely stable in vitro but its physiological significance is unclear. May interact with MAPT. May interact with MAP2. In the cerebrospinal fluid, interacts with secreted SORL1. Interacts with PMEL; this allows the loading of PMEL luminal fragment on ILVs to induce fibril nucleation. Post-translationally, APOE exists as multiple glycosylated and sialylated glycoforms within cells and in plasma. The extent of glycosylation and sialylation are tissue and context specific. Glycated in plasma VLDL. In terms of processing, phosphorylated by FAM20C in the extracellular medium.

Its subcellular location is the secreted. The protein resides in the extracellular space. It is found in the extracellular matrix. It localises to the extracellular vesicle. The protein localises to the endosome. Its subcellular location is the multivesicular body. In terms of biological role, APOE is an apolipoprotein, a protein associating with lipid particles, that mainly functions in lipoprotein-mediated lipid transport between organs via the plasma and interstitial fluids. APOE is a core component of plasma lipoproteins and is involved in their production, conversion and clearance. Apolipoproteins are amphipathic molecules that interact both with lipids of the lipoprotein particle core and the aqueous environment of the plasma. As such, APOE associates with chylomicrons, chylomicron remnants, very low density lipoproteins (VLDL) and intermediate density lipoproteins (IDL) but shows a preferential binding to high-density lipoproteins (HDL). It also binds a wide range of cellular receptors including the LDL receptor/LDLR, the LDL receptor-related proteins LRP1, LRP2 and LRP8 and the very low-density lipoprotein receptor/VLDLR that mediate the cellular uptake of the APOE-containing lipoprotein particles. Finally, APOE also has a heparin-binding activity and binds heparan-sulfate proteoglycans on the surface of cells, a property that supports the capture and the receptor-mediated uptake of APOE-containing lipoproteins by cells. A main function of APOE is to mediate lipoprotein clearance through the uptake of chylomicrons, VLDLs, and HDLs by hepatocytes. APOE is also involved in the biosynthesis by the liver of VLDLs as well as their uptake by peripheral tissues ensuring the delivery of triglycerides and energy storage in muscle, heart and adipose tissues. By participating in the lipoprotein-mediated distribution of lipids among tissues, APOE plays a critical role in plasma and tissues lipid homeostasis. APOE is also involved in two steps of reverse cholesterol transport, the HDLs-mediated transport of cholesterol from peripheral tissues to the liver, and thereby plays an important role in cholesterol homeostasis. First, it is functionally associated with ABCA1 in the biogenesis of HDLs in tissues. Second, it is enriched in circulating HDLs and mediates their uptake by hepatocytes. APOE also plays an important role in lipid transport in the central nervous system, regulating neuron survival and sprouting. In Tympanoctomys barrerae (Plains viscacha rat), this protein is Apolipoprotein E (Apoe).